A 290-amino-acid polypeptide reads, in one-letter code: tRNA dimethylallyltransferase (290 aa).

G11–S18 lines the ATP pocket. Residue T13–S18 participates in substrate binding. Interaction with substrate tRNA stretches follow at residues D36 to Q39 and Q158 to R162.

It belongs to the IPP transferase family. In terms of assembly, monomer. Requires Mg(2+) as cofactor.

The enzyme catalyses adenosine(37) in tRNA + dimethylallyl diphosphate = N(6)-dimethylallyladenosine(37) in tRNA + diphosphate. Its function is as follows. Catalyzes the transfer of a dimethylallyl group onto the adenine at position 37 in tRNAs that read codons beginning with uridine, leading to the formation of N6-(dimethylallyl)adenosine (i(6)A). This Bartonella tribocorum (strain CIP 105476 / IBS 506) protein is tRNA dimethylallyltransferase.